The following is a 255-amino-acid chain: Phosphate import ATP-binding protein PstB (255 aa).

Positions 9-250 constitute an ABC transporter domain; sequence IAVQNLNFYY…PKIQRTEDYI (242 aa). 41–48 lines the ATP pocket; sequence GPSGCGKS.

This sequence belongs to the ABC transporter superfamily. Phosphate importer (TC 3.A.1.7) family. In terms of assembly, the complex is composed of two ATP-binding proteins (PstB), two transmembrane proteins (PstC and PstA) and a solute-binding protein (PstS).

It localises to the cell inner membrane. The enzyme catalyses phosphate(out) + ATP + H2O = ADP + 2 phosphate(in) + H(+). In terms of biological role, part of the ABC transporter complex PstSACB involved in phosphate import. Responsible for energy coupling to the transport system. This is Phosphate import ATP-binding protein PstB from Haemophilus influenzae (strain 86-028NP).